The following is a 90-amino-acid chain: RNA-binding protein Hfq (90 aa).

The Sm domain occupies 11 to 71; it reads DVFLNSVRKT…ISTIMPAAPV (61 aa).

It belongs to the Hfq family. As to quaternary structure, homohexamer.

Functionally, RNA chaperone that binds small regulatory RNA (sRNAs) and mRNAs to facilitate mRNA translational regulation in response to envelope stress, environmental stress and changes in metabolite concentrations. Also binds with high specificity to tRNAs. The polypeptide is RNA-binding protein Hfq (Maricaulis maris (strain MCS10) (Caulobacter maris)).